A 180-amino-acid polypeptide reads, in one-letter code: ATP-dependent protease subunit HslV (180 aa).

The active site involves Thr-6. The Na(+) site is built by Ala-164, Cys-167, and Thr-170.

This sequence belongs to the peptidase T1B family. HslV subfamily. A double ring-shaped homohexamer of HslV is capped on each side by a ring-shaped HslU homohexamer. The assembly of the HslU/HslV complex is dependent on binding of ATP.

The protein localises to the cytoplasm. The catalysed reaction is ATP-dependent cleavage of peptide bonds with broad specificity.. Its activity is regulated as follows. Allosterically activated by HslU binding. In terms of biological role, protease subunit of a proteasome-like degradation complex believed to be a general protein degrading machinery. The chain is ATP-dependent protease subunit HslV from Borrelia duttonii (strain Ly).